The primary structure comprises 495 residues: MHNQTVRATVFKANAAAPQTKQIYEDDFSELYGEDIIAPPYNIIELKTIAEYSTILQQCIDAYRVNITGFGFDVEYTFDVNASDVDQAKKKRAEKDWARLEAFYKCLHFDESAEMILGYAIEDREKTGNGFMEVLRDGAGKPAGIEYLDVKYMRVCGAGEPVEVSFVYEENGKMKRIKRQKRFRKYVQMINGKKVFFKEYGDPRKMDIRTGEYVNTLAEKYQANEAIHLKIGSGVYGVPRWIGNIVNLYGARKAEELNFMYFKQGRHVPAAITVENGMLSEASYRELQEYMNDLEGVENAHKFLLIEAEGIAKEKDLHGGEDITPVSVEIKSLAEILQNDALFLEYDEKSRNKLRSAFRLPPLYTGEAQEYNRATADTARKITEEQVFQPERKTLVNKLNTLLLPELNIHDVRLTLKGPDFRDPLEIAKVLGPFITAGAVSPNDLRDLAGRVLGKTLEEWPEDIYKRPAGQDAEKTNLAALMQELKESIEDIKTS.

The protein belongs to the phage portal family. PBSX subfamily.

In Bacillus subtilis (strain 168), this protein is Phage-like element PBSX protein XkdE (xkdE).